A 910-amino-acid polypeptide reads, in one-letter code: Protein translocase subunit SecA 1 (910 aa).

ATP contacts are provided by residues Gln-86, 104–108, and Asp-512; that span reads GEGKT. Zn(2+) is bound by residues Cys-894, Cys-896, Cys-905, and His-906.

Belongs to the SecA family. As to quaternary structure, monomer and homodimer. Part of the essential Sec protein translocation apparatus which comprises SecA, SecYEG and auxiliary proteins SecDF-YajC and YidC. Requires Zn(2+) as cofactor.

The protein localises to the cell inner membrane. The protein resides in the cytoplasm. The enzyme catalyses ATP + H2O + cellular proteinSide 1 = ADP + phosphate + cellular proteinSide 2.. Part of the Sec protein translocase complex. Interacts with the SecYEG preprotein conducting channel. Has a central role in coupling the hydrolysis of ATP to the transfer of proteins into and across the cell membrane, serving both as a receptor for the preprotein-SecB complex and as an ATP-driven molecular motor driving the stepwise translocation of polypeptide chains across the membrane. The chain is Protein translocase subunit SecA 1 from Bordetella avium (strain 197N).